A 542-amino-acid chain; its full sequence is Heterogeneous nuclear ribonucleoprotein L-like (542 aa).

A disordered region spans residues Met1–Lys71. The span at Tyr18–Glu29 shows a compositional bias: basic and acidic residues. Lys26 is covalently cross-linked (Glycyl lysine isopeptide (Lys-Gly) (interchain with G-Cter in SUMO2)). Phosphoserine is present on Ser35. Thr46 bears the Phosphothreonine mark. The segment covering Arg48–Arg58 has biased composition (gly residues). Phosphoserine is present on residues Ser59, Ser68, and Ser75. 3 RRM domains span residues Pro76 to Ser150, Asn166 to Pro244, and Ser335 to Gln409. Lys491 is covalently cross-linked (Glycyl lysine isopeptide (Lys-Gly) (interchain with G-Cter in SUMO2)).

In terms of assembly, interacts with HNRNPL. As to expression, widely expressed. Detected in bone marrow stroma cells, skeletal muscle, heart, placenta, pancreas, kidney and lung.

Functionally, RNA-binding protein that functions as a regulator of alternative splicing for multiple target mRNAs, including PTPRC/CD45 and STAT5A. Required for alternative splicing of PTPRC. The sequence is that of Heterogeneous nuclear ribonucleoprotein L-like (HNRNPLL) from Homo sapiens (Human).